The following is a 147-amino-acid chain: Ribosome-binding factor A (147 aa).

Residues 122-147 (QQQFGSVDDDVIENDIEESDDTEGKV) form a disordered region. A compositionally biased stretch (acidic residues) spans 128–147 (VDDDVIENDIEESDDTEGKV).

The protein belongs to the RbfA family. Monomer. Binds 30S ribosomal subunits, but not 50S ribosomal subunits or 70S ribosomes.

It is found in the cytoplasm. One of several proteins that assist in the late maturation steps of the functional core of the 30S ribosomal subunit. Associates with free 30S ribosomal subunits (but not with 30S subunits that are part of 70S ribosomes or polysomes). Required for efficient processing of 16S rRNA. May interact with the 5'-terminal helix region of 16S rRNA. The polypeptide is Ribosome-binding factor A (Shewanella oneidensis (strain ATCC 700550 / JCM 31522 / CIP 106686 / LMG 19005 / NCIMB 14063 / MR-1)).